The primary structure comprises 491 residues: Proline--tRNA ligase (491 aa).

This sequence belongs to the class-II aminoacyl-tRNA synthetase family. ProS type 3 subfamily. As to quaternary structure, homodimer.

It localises to the cytoplasm. The catalysed reaction is tRNA(Pro) + L-proline + ATP = L-prolyl-tRNA(Pro) + AMP + diphosphate. Functionally, catalyzes the attachment of proline to tRNA(Pro) in a two-step reaction: proline is first activated by ATP to form Pro-AMP and then transferred to the acceptor end of tRNA(Pro). The chain is Proline--tRNA ligase from Halorubrum lacusprofundi (strain ATCC 49239 / DSM 5036 / JCM 8891 / ACAM 34).